The chain runs to 817 residues: Lon protease (817 aa).

The 196-residue stretch at 44 to 239 (LPILPLRNTV…ETLRYMNVEL (196 aa)) folds into the Lon N-terminal domain. ATP is bound at residue 390 to 397 (GPPGVGKT). The 182-residue stretch at 626 to 807 (NDVAGVVTGL…SEVLAIALTD (182 aa)) folds into the Lon proteolytic domain. Residues serine 713 and lysine 756 contribute to the active site.

Belongs to the peptidase S16 family. As to quaternary structure, homohexamer. Organized in a ring with a central cavity.

It localises to the cytoplasm. It carries out the reaction Hydrolysis of proteins in presence of ATP.. Functionally, ATP-dependent serine protease that mediates the selective degradation of mutant and abnormal proteins as well as certain short-lived regulatory proteins. Required for cellular homeostasis and for survival from DNA damage and developmental changes induced by stress. Degrades polypeptides processively to yield small peptide fragments that are 5 to 10 amino acids long. Binds to DNA in a double-stranded, site-specific manner. The sequence is that of Lon protease from Flavobacterium johnsoniae (strain ATCC 17061 / DSM 2064 / JCM 8514 / BCRC 14874 / CCUG 350202 / NBRC 14942 / NCIMB 11054 / UW101) (Cytophaga johnsonae).